The chain runs to 280 residues: tRNA pseudouridine synthase A (280 aa).

Asp-60 serves as the catalytic Nucleophile. Substrate is bound at residue Tyr-119.

Belongs to the tRNA pseudouridine synthase TruA family. As to quaternary structure, homodimer.

It carries out the reaction uridine(38/39/40) in tRNA = pseudouridine(38/39/40) in tRNA. In terms of biological role, formation of pseudouridine at positions 38, 39 and 40 in the anticodon stem and loop of transfer RNAs. In Treponema pallidum (strain Nichols), this protein is tRNA pseudouridine synthase A.